A 406-amino-acid polypeptide reads, in one-letter code: Type IV pilus assembly protein PilC (406 aa).

Helical transmembrane passes span 69 to 91 (IFSR…LAIL), 171 to 191 (YPVI…TGIV), 211 to 231 (FLIA…LLAV), and 377 to 397 (MIIF…LPLF).

This sequence belongs to the GSP F family. As to quaternary structure, homotetramer. Interacts with PilB.

It localises to the cell inner membrane. Essential inner membrane component of the type IV pilus (T4P) that plays a role in surface and host cell adhesion, colonization, biofilm maturation, virulence, and twitching, a form of surface-associated motility facilitated by cycles of extension, adhesion, and retraction of T4P fibers. Controls both pilus assembly and disassembly and plays an important role in PilB localization to the complex and ATPase activity. The protein is Type IV pilus assembly protein PilC of Thermus thermophilus (strain ATCC 27634 / DSM 579 / HB8).